The sequence spans 193 residues: Zinc finger protein 740 (193 aa).

Residues 33–75 (SKQAENGERAGSPDVLRCSSQGHRKDSDKSRSRKDDDSLSEAS) are disordered. A Glycyl lysine isopeptide (Lys-Gly) (interchain with G-Cter in SUMO2) cross-link involves residue K34. Residue S44 is modified to Phosphoserine. The segment covering 55 to 69 (HRKDSDKSRSRKDDD) has biased composition (basic and acidic residues). 2 C2H2-type zinc fingers span residues 101-123 (FVCEHCFGAFRSSYHLKRHILIH) and 129-151 (FECDICDMRFIQKYHLERHKRVH). The C2H2-type 3; atypical zinc finger occupies 157 to 179 (YQCERCHQCFSRTDRLLRHKRMC).

Belongs to the krueppel C2H2-type zinc-finger protein family.

Its subcellular location is the nucleus. Functionally, may be involved in transcriptional regulation. The polypeptide is Zinc finger protein 740 (ZNF740) (Homo sapiens (Human)).